A 1033-amino-acid polypeptide reads, in one-letter code: RNA cytidine acetyltransferase (1033 aa).

ATP is bound by residues 285–294 and Arg-465; that span reads GRGKSAALGL. In terms of domain architecture, N-acetyltransferase spans 560 to 694; the sequence is VDLKNPKLPD…IHVRDAKTMP (135 aa). Acetyl-CoA-binding positions include 626-628, 633-639, and Arg-727; these read IAV and VKMGYGT. The interval 988–1033 is disordered; sequence ENQIQKTNGKGARVVSIKGEKRKNNSLDASDKKTKEKPSSKKKFRK. Over residues 1005–1026 the composition is skewed to basic and acidic residues; sequence KGEKRKNNSLDASDKKTKEKPS.

The protein belongs to the RNA cytidine acetyltransferase family. NAT10 subfamily. Interacts with tan1.

Its subcellular location is the nucleus. It localises to the nucleolus. The catalysed reaction is a cytidine in 18S rRNA + acetyl-CoA + ATP + H2O = an N(4)-acetylcytidine in 18S rRNA + ADP + phosphate + CoA + H(+). It catalyses the reaction a cytidine in tRNA + acetyl-CoA + ATP + H2O = an N(4)-acetylcytidine in tRNA + ADP + phosphate + CoA + H(+). Functionally, RNA cytidine acetyltransferase with specificity toward both 18S rRNA and tRNAs. Catalyzes the formation of N(4)-acetylcytidine (ac4C) at positions 1297 and 1815 in 18S rRNA. Required for early nucleolar cleavages of precursor rRNA at sites A0, A1 and A2 during 18S rRNA synthesis. Catalyzes the formation of ac4C in serine and leucine tRNAs. Requires the tRNA-binding adapter protein tan1 for full tRNA acetyltransferase activity but not for 18S rRNA acetylation. The protein is RNA cytidine acetyltransferase of Schizosaccharomyces pombe (strain 972 / ATCC 24843) (Fission yeast).